We begin with the raw amino-acid sequence, 411 residues long: Multifunctional CCA protein (411 aa).

ATP-binding residues include G8 and R11. CTP contacts are provided by G8 and R11. E21 and D23 together coordinate Mg(2+). The ATP site is built by R91, R137, and R140. Positions 91, 137, and 140 each coordinate CTP. An HD domain is found at 228–329 (TGVHALLALE…LKTLLALDGL (102 aa)).

The protein belongs to the tRNA nucleotidyltransferase/poly(A) polymerase family. Bacterial CCA-adding enzyme type 1 subfamily. As to quaternary structure, monomer. Can also form homodimers and oligomers. Mg(2+) is required as a cofactor. It depends on Ni(2+) as a cofactor.

The enzyme catalyses a tRNA precursor + 2 CTP + ATP = a tRNA with a 3' CCA end + 3 diphosphate. The catalysed reaction is a tRNA with a 3' CCA end + 2 CTP + ATP = a tRNA with a 3' CCACCA end + 3 diphosphate. Functionally, catalyzes the addition and repair of the essential 3'-terminal CCA sequence in tRNAs without using a nucleic acid template. Adds these three nucleotides in the order of C, C, and A to the tRNA nucleotide-73, using CTP and ATP as substrates and producing inorganic pyrophosphate. tRNA 3'-terminal CCA addition is required both for tRNA processing and repair. Also involved in tRNA surveillance by mediating tandem CCA addition to generate a CCACCA at the 3' terminus of unstable tRNAs. While stable tRNAs receive only 3'-terminal CCA, unstable tRNAs are marked with CCACCA and rapidly degraded. This Teredinibacter turnerae (strain ATCC 39867 / T7901) protein is Multifunctional CCA protein.